The chain runs to 948 residues: UvrABC system protein A (948 aa).

Position 33-40 (33-40) interacts with ATP; that stretch reads GLSGSGKS. The C4-type zinc-finger motif lies at 252–279; it reads CPICGFSIGELEPRMFSFNSPFGACPTC. ABC transporter domains lie at 309 to 587 and 607 to 935; these read WIPT…KKSL and ASDR…KYLK. 639-646 is an ATP binding site; sequence GVSGSGKS. The C4-type zinc-finger motif lies at 738-764; the sequence is CEACKGDGIIKIEMHFLPDVYVPCEVC.

It belongs to the ABC transporter superfamily. UvrA family. In terms of assembly, forms a heterotetramer with UvrB during the search for lesions.

The protein resides in the cytoplasm. In terms of biological role, the UvrABC repair system catalyzes the recognition and processing of DNA lesions. UvrA is an ATPase and a DNA-binding protein. A damage recognition complex composed of 2 UvrA and 2 UvrB subunits scans DNA for abnormalities. When the presence of a lesion has been verified by UvrB, the UvrA molecules dissociate. The polypeptide is UvrABC system protein A (Staphylococcus aureus (strain N315)).